A 200-amino-acid polypeptide reads, in one-letter code: MRIILLGPPGAGKGTQSERIVERYRVPQLSTGDMLRAAVAAETPVGLEAKAIMESGGLVSDAIVVGIVADRIEEADAKNGFILDGFPRTVEQAKALDAMLAQKGIALDAVVEFVVDETALVGRIAKRAEETAARGQPVRKDDTPEVFKTRLDAYRKQTAPLSDYYAGTGLLRKIDGMKPIDVVTGDVTALLEGFRETASS.

10–15 (GAGKGT) lines the ATP pocket. Residues 30–59 (STGDMLRAAVAAETPVGLEAKAIMESGGLV) form an NMP region. Residues threonine 31, arginine 36, 57–59 (GLV), 85–88 (GFPR), and glutamine 92 each bind AMP. The tract at residues 126 to 142 (KRAEETAARGQPVRKDD) is LID. Arginine 127 contributes to the ATP binding site. 2 residues coordinate AMP: arginine 139 and arginine 150. Lysine 178 serves as a coordination point for ATP.

Belongs to the adenylate kinase family. In terms of assembly, monomer.

Its subcellular location is the cytoplasm. It carries out the reaction AMP + ATP = 2 ADP. It functions in the pathway purine metabolism; AMP biosynthesis via salvage pathway; AMP from ADP: step 1/1. Catalyzes the reversible transfer of the terminal phosphate group between ATP and AMP. Plays an important role in cellular energy homeostasis and in adenine nucleotide metabolism. In Methylorubrum extorquens (strain CM4 / NCIMB 13688) (Methylobacterium extorquens), this protein is Adenylate kinase.